Consider the following 876-residue polypeptide: Senescence-induced receptor-like serine/threonine-protein kinase (876 aa).

An N-terminal signal peptide occupies residues 1–24 (MAMLKSLSSILFTSFALLFFLVHA). Residues 25 to 517 (QDQSGFISID…SNTKKKNKNG (493 aa)) lie on the Extracellular side of the membrane. LRR repeat units follow at residues 415–438 (RVVS…SNLT), 439–462 (SIRK…ANLP), and 463–483 (NLTE…QRLH). A helical membrane pass occupies residues 518 to 538 (YIIPLVVVGIIVVLLTALALF). Residues 539 to 876 (RRFKKKQQRG…LDTEMVPRAR (338 aa)) are Cytoplasmic-facing. Residues 574–847 (NNFERVIGKG…VVMELKQIVY (274 aa)) form the Protein kinase domain. Residues 580 to 588 (IGKGGFGKV) and K601 each bind ATP. Y646 is subject to Phosphotyrosine. D697 acts as the Proton acceptor in catalysis. S731 carries the phosphoserine modification. The residue at position 732 (T732) is a Phosphothreonine. Residue Y745 is modified to Phosphotyrosine.

The protein belongs to the protein kinase superfamily. Ser/Thr protein kinase family.

Its subcellular location is the membrane. Its function is as follows. Involved in innate immune response of plants. The polypeptide is Senescence-induced receptor-like serine/threonine-protein kinase (SIRK) (Arabidopsis thaliana (Mouse-ear cress)).